The sequence spans 237 residues: Cysteine-rich venom protein DIS2 (237 aa).

A signal peptide spans 1-18; the sequence is MFVFILLSLAAVLQQSFG. In terms of domain architecture, SCP spans 37–165; it reads VDKHNAFRRS…SYNYFYVCQY (129 aa). 7 disulfides stabilise this stretch: C74/C152, C91/C166, C147/C163, C185/C192, C188/C197, C201/C234, and C219/C232. The ShKT domain occupies 201 to 234; the sequence is CSREDVFMNCKSLVAQSNCQDDYIRKNCPATCFC.

The protein belongs to the CRISP family. In terms of tissue distribution, expressed by the venom gland.

The protein resides in the secreted. Weakly blocks contraction of smooth muscle elicited by high potassium-induced depolarization, but does not block caffeine-stimulated contraction. May target voltage-gated calcium channels on smooth muscle. This is Cysteine-rich venom protein DIS2 from Dispholidus typus (Boomslang).